Consider the following 364-residue polypeptide: MSAPKKIVVLPGDHVGQEITAEAIKVLKAISDVRSNVKFDFENHLIGGAAIDATGVPLPDEALEASKKADAVLLGAVGGPKWGTGSVRPEQGLLKIRKELQLYANLRPCNFASDSLLDLSPIKPQFAKGTDFVVVRELVGGIYFGKRKEDDGDGVAWDSEQYTVPEVQRITRMAAFMALQHEPPLPIWSLDKANVLASSRLWRKTVEETIKNEFPTLKVQHQLIDSAAMILVKNPTHLNGIIITSNMFGDIISDEASVIPGSLGLLPSASLASLPDKNTAFGLYEPCHGSAPDLPKNKVNPIATILSAAMMLKLSLNLPEEGKAIEDAVKKVLDAGIRTGDLGGSNSTTEVGDAVAEEVKKILA.

79 to 90 is a binding site for NAD(+); the sequence is GPKWGTGSVRPE. R97, R107, R136, and D225 together coordinate substrate. Mg(2+) contacts are provided by D225, D250, and D254. 289-300 contacts NAD(+); the sequence is GSAPDLPKNKVN.

This sequence belongs to the isocitrate and isopropylmalate dehydrogenases family. Homodimer. It depends on Mg(2+) as a cofactor. Mn(2+) serves as cofactor.

It is found in the cytoplasm. The catalysed reaction is (2R,3S)-3-isopropylmalate + NAD(+) = 4-methyl-2-oxopentanoate + CO2 + NADH. Its pathway is amino-acid biosynthesis; L-leucine biosynthesis; L-leucine from 3-methyl-2-oxobutanoate: step 3/4. In terms of biological role, catalyzes the oxidation of 3-carboxy-2-hydroxy-4-methylpentanoate (3-isopropylmalate) to 3-carboxy-4-methyl-2-oxopentanoate. The product decarboxylates to 4-methyl-2 oxopentanoate. This chain is 3-isopropylmalate dehydrogenase (LEU2), found in Saccharomyces cerevisiae (strain ATCC 204508 / S288c) (Baker's yeast).